Here is a 185-residue protein sequence, read N- to C-terminus: Probable chorismate pyruvate-lyase (185 aa).

R75, L113, and E174 together coordinate substrate.

It belongs to the UbiC family.

It localises to the cytoplasm. The catalysed reaction is chorismate = 4-hydroxybenzoate + pyruvate. It participates in cofactor biosynthesis; ubiquinone biosynthesis. Removes the pyruvyl group from chorismate, with concomitant aromatization of the ring, to provide 4-hydroxybenzoate (4HB) for the ubiquinone pathway. This chain is Probable chorismate pyruvate-lyase, found in Aromatoleum aromaticum (strain DSM 19018 / LMG 30748 / EbN1) (Azoarcus sp. (strain EbN1)).